An 88-amino-acid chain; its full sequence is Cell division topological specificity factor (88 aa).

This sequence belongs to the MinE family.

Its function is as follows. Prevents the cell division inhibition by proteins MinC and MinD at internal division sites while permitting inhibition at polar sites. This ensures cell division at the proper site by restricting the formation of a division septum at the midpoint of the long axis of the cell. The polypeptide is Cell division topological specificity factor (Paracidovorax citrulli (strain AAC00-1) (Acidovorax citrulli)).